Consider the following 162-residue polypeptide: Shikimate kinase (162 aa).

An ATP-binding site is contributed by 10 to 15 (GAGKST). Ser14 is a binding site for Mg(2+). The substrate site is built by Asp28, Arg52, and Gly73. Arg113 contributes to the ATP binding site. Residue Arg129 coordinates substrate.

Belongs to the shikimate kinase family. Monomer. The cofactor is Mg(2+).

Its subcellular location is the cytoplasm. The catalysed reaction is shikimate + ATP = 3-phosphoshikimate + ADP + H(+). The protein operates within metabolic intermediate biosynthesis; chorismate biosynthesis; chorismate from D-erythrose 4-phosphate and phosphoenolpyruvate: step 5/7. Functionally, catalyzes the specific phosphorylation of the 3-hydroxyl group of shikimic acid using ATP as a cosubstrate. This is Shikimate kinase from Lactococcus lactis subsp. cremoris (strain SK11).